Here is a 504-residue protein sequence, read N- to C-terminus: Facilitated trehalose transporter Tret1 (504 aa).

Over 1-39 (MELNNKEDSPRHTVPFVRQITEDGKAKLEIYRPTTNPIY) the chain is Cytoplasmic. Residues 40-60 (IYTQILAAIAVSMGSMVVGFA) form a helical membrane-spanning segment. Residues 61–87 (SAYTSPALVSMQNTTITSFKVTEQEAS) lie on the Extracellular side of the membrane. A glycan (N-linked (GlcNAc...) asparagine) is linked at Asn73. The chain crosses the membrane as a helical span at residues 88–108 (WVGGIMPLAGLAGGIAGGPFI). The Cytoplasmic segment spans residues 109 to 120 (EYLGRKNTILAT). The chain crosses the membrane as a helical span at residues 121–141 (AVPFIVAWLLIAFANSIWMVL). The Extracellular portion of the chain corresponds to 142-145 (AGRA). A helical transmembrane segment spans residues 146–166 (LSGFCVGIASLSLPVYLGETV). The Cytoplasmic segment spans residues 167–171 (QPEVR). Residues 172–192 (GTLGLLPTAFGNIGILICFVA) traverse the membrane as a helical segment. Over 193–199 (GKYVNWS) the chain is Extracellular. An N-linked (GlcNAc...) asparagine glycan is attached at Asn197. The helical transmembrane segment at 200-220 (GLAFIGSILPIPFMVLTLLIP) threads the bilayer. At 221 to 283 (ETPRWFVTRG…DLMKRSNLKP (63 aa)) the chain is on the cytoplasmic side. A helical membrane pass occupies residues 284-304 (LLIALGLMFFQQLSGINAVIF). At 305 to 320 (YTVSIFKDAGSTIDEN) the chain is on the extracellular side. Residues 321–341 (LCTIIVGVVNFGATFFATVLI) traverse the membrane as a helical segment. The Cytoplasmic segment spans residues 342–347 (DRLGRK). A helical membrane pass occupies residues 348-368 (ILLYISEVAMVITLLTLGTFF). The Extracellular segment spans residues 369 to 387 (YYKNSGNDVSNIGWLPLAS). Residues 388–408 (FVIYVIGFSSGVGPIPWLMLG) traverse the membrane as a helical segment. The Cytoplasmic portion of the chain corresponds to 409–424 (EILPGKIRGSAASVAT). A helical transmembrane segment spans residues 425–445 (GFNWTCTFIVTKTFADIVAAI). The Extracellular segment spans residues 446-448 (GNH). A helical membrane pass occupies residues 449-469 (GAFWFFGVICLIGLFFVIFFV). Residues 470–504 (PETQGKSLEEIERKMMGRVRRMSSVANMKPLSFNM) lie on the Cytoplasmic side of the membrane.

The protein belongs to the major facilitator superfamily. Sugar transporter (TC 2.A.1.1) family. Trehalose transporter subfamily. In terms of tissue distribution, highest expression in the fat body. Not expressed in other tissues including the midgut, muscle, and integuments after 24 hours of dehydration.

Its subcellular location is the cell membrane. In terms of biological role, high-capacity facilitative transporter for trehalose, required to induce anhydrobiosis. Anhydrobiotic larvae can survive almost complete dehydration. Does not transport maltose, sucrose or lactose. Mediates the bidirectional transfer of trehalose. Responsible for the transport of trehalose synthesized in the fat body and the incorporation of trehalose into other tissues that require a carbon source, thereby regulating trehalose levels in the hemolymph. The protein is Facilitated trehalose transporter Tret1 of Polypedilum vanderplanki (Sleeping chironomid midge).